Consider the following 544-residue polypeptide: Cytochrome P450 monooxygenase tenB (544 aa).

Residues 13 to 33 form a helical membrane-spanning segment; it reads LGYYEKVTGILGVVSIILLFW. Over residues 438-448 the composition is skewed to basic and acidic residues; the sequence is FDPFRFSRASK. A disordered region spans residues 438–467; that stretch reads FDPFRFSRASKDDDDDDDDDGRSTSSHTKD. Cys486 serves as a coordination point for heme.

This sequence belongs to the cytochrome P450 family. Heme is required as a cofactor.

Its subcellular location is the membrane. Its pathway is secondary metabolite biosynthesis. Its function is as follows. Cytochrome P450 monooxygenase; part of the gene cluster that mediates the biosynthesis of tenellin-type 2-pyridones, iron-chelating compounds involved in iron stress tolerance, competition with the natural competitor fungus Metarhizium robertsii and insect hosts infection. TenB catalyzes the selective N-hydroxylation of the 2-pyridone nitrogen of yield tellinin and 15-hydroxytellenin (15-HT), respectively. The pathway begins with the assembly of the polyketide-amino acid backbone by the hybrid PKS-NRPS tenS with the help of the enoyl reductase tenC. These enzymes catalyze the synthesis of the pyrrolidine-2-dione intermediates pretellinin A, 11-hydropretellenin A, 12-hydropretellenin A, 13-hydropretellenin A, 14-hydropretellenin A, 12-oxopretellenin A and prototellinin D. The cytochrome P450 monooxygenase tenA then catalyzes an oxidative ring expansion of pretenellin A and 14-hydropretellenin A to form the 2-pyridone core, leading to pretenellin B and pyridovericin, respectively. The cytochrome P450 monooxygenase tenB is then required for the selective N-hydroxylation of the 2-pyridone nitrogen of yield tellinin and 15-hydroxytellenin (15-HT), respectively. The UDP-glucosyltransferase GT1 and the methyltransferase MT1, located outside the tenS gene cluster, contribute to the stepwise glycosylation and methylation of 15-HT to obtain the glycoside pyridovericin-N-O-(4-O-methyl-beta-D-glucopyranoside) (PMGP). Additional related compounds such as 1-O-methyl-15-HT, (8Z)-1-O-methyl-15-HT, and O-methyltenellin A are also produced but the enzymes involved in their biosynthesis have still to be determined. The sequence is that of Cytochrome P450 monooxygenase tenB from Beauveria bassiana (strain ARSEF 2860) (White muscardine disease fungus).